The sequence spans 322 residues: GTP 3',8-cyclase (322 aa).

Residues 5-217 (SYGRVIDYLR…NIIAQKYSFK (213 aa)) form the Radical SAM core domain. Arg14 serves as a coordination point for GTP. Residues Cys21 and Cys25 each coordinate [4Fe-4S] cluster. Tyr27 is an S-adenosyl-L-methionine binding site. Cys28 is a [4Fe-4S] cluster binding site. Arg64 is a GTP binding site. Gly68 provides a ligand contact to S-adenosyl-L-methionine. Thr95 contacts GTP. Residue Ser119 coordinates S-adenosyl-L-methionine. Lys155 contributes to the GTP binding site. Met189 lines the S-adenosyl-L-methionine pocket. [4Fe-4S] cluster is bound by residues Cys249 and Cys252. Residue 254–256 (RIR) coordinates GTP. Position 266 (Cys266) interacts with [4Fe-4S] cluster.

This sequence belongs to the radical SAM superfamily. MoaA family. In terms of assembly, monomer and homodimer. [4Fe-4S] cluster serves as cofactor.

It carries out the reaction GTP + AH2 + S-adenosyl-L-methionine = (8S)-3',8-cyclo-7,8-dihydroguanosine 5'-triphosphate + 5'-deoxyadenosine + L-methionine + A + H(+). It functions in the pathway cofactor biosynthesis; molybdopterin biosynthesis. In terms of biological role, catalyzes the cyclization of GTP to (8S)-3',8-cyclo-7,8-dihydroguanosine 5'-triphosphate. The sequence is that of GTP 3',8-cyclase from Campylobacter lari (strain RM2100 / D67 / ATCC BAA-1060).